Consider the following 995-residue polypeptide: Endosome/lysosome-associated apoptosis and autophagy regulator family member 2 (995 aa).

Residues 1–21 (MGVFCWSGCLVISLQLLLGAA) form the signal peptide. The Extracellular segment spans residues 22-895 (LDNLSTCKEE…ACESIDFWLK (874 aa)). Asparagine 24, asparagine 136, asparagine 245, asparagine 372, asparagine 527, asparagine 649, asparagine 683, asparagine 700, and asparagine 758 each carry an N-linked (GlcNAc...) asparagine glycan. In terms of domain architecture, MRH spans 639–843 (SECLVTYTNE…LWETAEACPL (205 aa)). Cystine bridges form between cysteine 641-cysteine 687 and cysteine 697-cysteine 725. Cystine bridges form between cysteine 793-cysteine 829 and cysteine 805-cysteine 841. N-linked (GlcNAc...) asparagine glycosylation occurs at asparagine 883. A helical transmembrane segment spans residues 896–916 (VGAGVGAFTAVLLIALTCYFW). Residues 917-995 (KKNQKLEYKY…QLKSSRAQNI (79 aa)) lie on the Cytoplasmic side of the membrane.

The protein belongs to the ELAPOR family. Expressed in the animal half of the embryo during gastrulation, becoming restricted to the ventral ectoderm at stage 12.5. At the neurula stage, expressed in the anterior ectoderm surrounding the neural plate, and weakly in the epidermis. Expression is especially high in the presumptive hatching gland and cement gland regions. Surprisingly, by the tailbud stage (stage 22), expression is limited to the hatching gland and is not seen in the cement gland. Conversely, in tadpoles expressed broadly in the head, heart and fin. Expression in the head is seen in the primary mouth and in the brain, eyes, otic vesicles and olfactory pits.

Its subcellular location is the cell membrane. In terms of biological role, functions as a regulator of the BMP signaling pathway and is involved in epidermal differentiation. The polypeptide is Endosome/lysosome-associated apoptosis and autophagy regulator family member 2 (elapor2) (Xenopus laevis (African clawed frog)).